Consider the following 263-residue polypeptide: ABC transporter I family member 17 (263 aa).

An ABC transporter domain is found at 29–260 (IRVHDLTRVA…THPMAQRFLQ (232 aa)). 62-69 (GPSGSGKS) contacts ATP.

The protein belongs to the ABC transporter superfamily. ABCI family.

This is ABC transporter I family member 17 (ABCI17) from Arabidopsis thaliana (Mouse-ear cress).